A 122-amino-acid polypeptide reads, in one-letter code: Large ribosomal subunit protein bL12 (122 aa).

This sequence belongs to the bacterial ribosomal protein bL12 family. As to quaternary structure, homodimer. Part of the ribosomal stalk of the 50S ribosomal subunit. Forms a multimeric L10(L12)X complex, where L10 forms an elongated spine to which 2 to 4 L12 dimers bind in a sequential fashion. Binds GTP-bound translation factors.

Functionally, forms part of the ribosomal stalk which helps the ribosome interact with GTP-bound translation factors. Is thus essential for accurate translation. The polypeptide is Large ribosomal subunit protein bL12 (Aliivibrio fischeri (strain ATCC 700601 / ES114) (Vibrio fischeri)).